The following is a 92-amino-acid chain: Anti-restriction endonuclease (92 aa).

Its function is as follows. Pays a role in the inhibition of the host restriction-modification system. Strongly inhibits the host mcrA endonuclease that cleaves 5-methyl and 5-hydroxymethylcytosines at the specific DNA sequence C(me)CGG. This Enterobacteria phage T4 (Bacteriophage T4) protein is Anti-restriction endonuclease (arn).